The following is a 326-amino-acid chain: Phospho-N-acetylmuramoyl-pentapeptide-transferase (326 aa).

Helical transmembrane passes span 2–22 (ILATKVFFTSFVFGFILFPYF), 51–71 (VPPMGGIIILTSSLLPILLWV), 73–93 (LTPEILLLILITLFFALLGFI), 113–133 (ILIQFIVALVGVFILKLYSAE), 143–163 (GVIIDFGYLYVPFAAFVIVGS), 175–195 (GLAATQVITSFAFLGLIAYIT), 199–219 (MNITLFCIAFIGAILSFLWFN), 225–245 (IFMGDVGSLSVGAALGLTSVL), 250–270 (MLFAVIGIIFVIETLSVIIQI), and 305–325 (VIVMKFWIISIICSVFTITFL).

It belongs to the glycosyltransferase 4 family. MraY subfamily. It depends on Mg(2+) as a cofactor.

Its subcellular location is the cell membrane. The enzyme catalyses UDP-N-acetyl-alpha-D-muramoyl-L-alanyl-gamma-D-glutamyl-meso-2,6-diaminopimeloyl-D-alanyl-D-alanine + di-trans,octa-cis-undecaprenyl phosphate = di-trans,octa-cis-undecaprenyl diphospho-N-acetyl-alpha-D-muramoyl-L-alanyl-D-glutamyl-meso-2,6-diaminopimeloyl-D-alanyl-D-alanine + UMP. The protein operates within cell wall biogenesis; peptidoglycan biosynthesis. In terms of biological role, catalyzes the initial step of the lipid cycle reactions in the biosynthesis of the cell wall peptidoglycan: transfers peptidoglycan precursor phospho-MurNAc-pentapeptide from UDP-MurNAc-pentapeptide onto the lipid carrier undecaprenyl phosphate, yielding undecaprenyl-pyrophosphoryl-MurNAc-pentapeptide, known as lipid I. This Wolbachia sp. subsp. Drosophila simulans (strain wRi) protein is Phospho-N-acetylmuramoyl-pentapeptide-transferase.